We begin with the raw amino-acid sequence, 176 residues long: Ribosome maturation factor RimM (176 aa).

The PRC barrel domain occupies 97–176 (DSEFYHRDLI…QILVDWDPDF (80 aa)).

The protein belongs to the RimM family. As to quaternary structure, binds ribosomal protein uS19.

Its subcellular location is the cytoplasm. Its function is as follows. An accessory protein needed during the final step in the assembly of 30S ribosomal subunit, possibly for assembly of the head region. Essential for efficient processing of 16S rRNA. May be needed both before and after RbfA during the maturation of 16S rRNA. It has affinity for free ribosomal 30S subunits but not for 70S ribosomes. In Shewanella frigidimarina (strain NCIMB 400), this protein is Ribosome maturation factor RimM.